A 1452-amino-acid chain; its full sequence is Pleiotropic drug resistance protein 1 (1452 aa).

The 274-residue stretch at 152–425 folds into the ABC transporter 1 domain; sequence LNYLHILPNR…FEYMGFICPE (274 aa). 185–192 serves as a coordination point for ATP; it reads GPPSSGKT. Residues 504–716 enclose the ABC transmembrane type-2 1 domain; sequence LLKACTAREY…AQNAIAVNEF (213 aa). 7 consecutive transmembrane segments (helical) span residues 521 to 541, 554 to 574, 609 to 629, 640 to 660, 664 to 684, 694 to 714, and 753 to 773; these read FVYIFKMIQLTLMASITMTLF, GAVFLGALFYALIMIMFNGFS, IPITLVEVAIWVCMTYYVIGF, LLLLICVNQMASGLFRLMGAL, IIVANTFGSFVLLTVLVMGGF, WWIWGYWISPMMYAQNAIAVN, and IGAGALIGYVFLFNFLFAVAL. Residues 808-830 form a disordered region; sequence LGKSSSEKGNDVRRSASSRSMSS. The segment covering 812 to 821 has biased composition (basic and acidic residues); it reads SSEKGNDVRR. The region spanning 855 to 1107 is the ABC transporter 2 domain; it reads ITFDDIRYAV…HLIKYFEGID (253 aa). 900 to 907 is an ATP binding site; that stretch reads GVSGAGKT. The region spanning 1180 to 1394 is the ABC transmembrane type-2 2 domain; the sequence is TQCMACFWKQ…TLYGLIASQF (215 aa). Transmembrane regions (helical) follow at residues 1199-1219, 1239-1259, 1287-1307, 1314-1334, 1344-1364, 1375-1395, and 1421-1441; these read YTAVRIMFTFFIALMFGTIFW, YIAVLFLGVQNATTVQPVIAI, LPYLFLQTIIYGVIVYAMIGF, FFWYLFFMYFTLLYFTLYGMM, IAAIISSAFYAVWNLFCGFIV, WYYYICPISWTLYGLIASQFG, and FVGYVALILVGISVLFLFIFA.

This sequence belongs to the ABC transporter superfamily. ABCG family. PDR (TC 3.A.1.205) subfamily. As to expression, expressed in root hypodermal passage cells. Expressed in stem tissues, particularly the vasculature and nodes adjacent to leaf axils.

The protein resides in the cell membrane. Cellular strigolactone (SL) transporter required for the exudation of SL from the root to the soil. The presence of SL in the vicinity of the roots is required for development of symbiotic interactions with arbuscular mycorrhizal fungi (AMF). Transports SL in the above ground tissues and is required for the control of shoot branching. SL regulates plant shoot architecture by inhibiting the outgrowth of axillary buds. Involved in the regulation of shootward and outward directional strigolactone transport in roots. Due to its polar localization in root cells, mediates directional shootward strigolactone transport, as well as localized outward directional transport for exudation to the soil. The sequence is that of Pleiotropic drug resistance protein 1 from Petunia hybrida (Petunia).